The chain runs to 125 residues: Conopressin-conophysin, isoform 1 (125 aa).

An N-terminal signal peptide occupies residues 1 to 22 (MQMGRPTLLPCLLLLLVLSTQA). A disulfide bridge connects residues cysteine 23 and cysteine 28. At glycine 31 the chain carries Glycine amide. Residues 32 to 39 (GKRDVHMI) constitute a propeptide that is removed on maturation. Disulfide bonds link cysteine 45/cysteine 85, cysteine 48/cysteine 59, cysteine 53/cysteine 75, cysteine 60/cysteine 65, cysteine 92/cysteine 112, cysteine 104/cysteine 124, and cysteine 113/cysteine 118.

Belongs to the vasopressin/oxytocin family. As to expression, expressed by the venom gland.

It is found in the secreted. Targets vasopressin-oxytocin related receptors. The polypeptide is Conopressin-conophysin, isoform 1 (Conus monile (Necklace cone)).